The following is a 301-amino-acid chain: NADH-cytochrome b5 reductase 3 (301 aa).

A lipid anchor (N-myristoyl glycine) is attached at G2. The FAD-binding FR-type domain maps to 40 to 152 (DIKYPLRLID…RGPNGLLVYQ (113 aa)). Position 42 is an N6-acetyllysine (K42). Y43 carries the post-translational modification Phosphotyrosine. K50 is modified (N6-acetyllysine). 6 residues coordinate FAD: R92, P93, Y94, V109, K111, and F114. Residue K120 is modified to N6-acetyllysine. FAD is bound by residues K126, M127, S128, and T185.

Belongs to the flavoprotein pyridine nucleotide cytochrome reductase family. As to quaternary structure, component of a complex composed of cytochrome b5, NADH-cytochrome b5 reductase (CYB5R3) and MTARC2. Interacts with MTLN; the interaction is required to maintain cellular lipid composition and leads to stimulation of mitochondrial respiratory complex I activity. Requires FAD as cofactor.

The protein resides in the endoplasmic reticulum membrane. It is found in the mitochondrion outer membrane. The enzyme catalyses 2 Fe(III)-[cytochrome b5] + NADH = 2 Fe(II)-[cytochrome b5] + NAD(+) + H(+). In terms of biological role, catalyzes the reduction of two molecules of cytochrome b5 using NADH as the electron donor. The sequence is that of NADH-cytochrome b5 reductase 3 (CYB5R3) from Bos taurus (Bovine).